The following is a 118-amino-acid chain: D-dopachrome decarboxylase (118 aa).

N-acetylproline is present on proline 2.

It belongs to the MIF family. Homotrimer.

The protein localises to the cytoplasm. The enzyme catalyses D-dopachrome + H(+) = 5,6-dihydroxyindole + CO2. Functionally, tautomerization of D-dopachrome with decarboxylation to give 5,6-dihydroxyindole (DHI). This chain is D-dopachrome decarboxylase (DDT), found in Gallus gallus (Chicken).